We begin with the raw amino-acid sequence, 538 residues long: (R)-citramalate synthase (538 aa).

The Pyruvate carboxyltransferase domain occupies 3-268 (IKVYDTTLRD…IPKENLKKLF (266 aa)).

The protein belongs to the alpha-IPM synthase/homocitrate synthase family.

It catalyses the reaction pyruvate + acetyl-CoA + H2O = (3R)-citramalate + CoA + H(+). It participates in amino-acid biosynthesis; L-isoleucine biosynthesis; 2-oxobutanoate from pyruvate: step 1/3. Functionally, catalyzes the condensation of pyruvate and acetyl-coenzyme A to form (R)-citramalate. This Thermotoga maritima (strain ATCC 43589 / DSM 3109 / JCM 10099 / NBRC 100826 / MSB8) protein is (R)-citramalate synthase.